A 153-amino-acid polypeptide reads, in one-letter code: Pheromone-binding protein Gp-9 (153 aa).

A signal peptide spans 1–19 (MKTFVLHIFIFALVAFASA). Cystine bridges form between Cys-37/Cys-77, Cys-73/Cys-129, and Cys-118/Cys-138.

The protein belongs to the PBP/GOBP family. Homodimer.

The protein localises to the secreted. In terms of biological role, colony queen number, a major feature of social organization, is associated with worker genotype for Gp-9. Colonies are headed by either a single reproductive queen (monogyne form) or multiple queens (polygyne form). Differences in worker Gp-9 genotypes between social forms may cause differences in workers' abilities to recognize queens and regulate their numbers. The sequence is that of Pheromone-binding protein Gp-9 from Solenopsis pusillignis (Fire ant).